We begin with the raw amino-acid sequence, 110 residues long: NADH-quinone oxidoreductase subunit K (110 aa).

The next 3 membrane-spanning stretches (helical) occupy residues 13 to 33 (LNHYLILSSLVFTIGMFGLFM), 41 to 61 (ILMSIELMLLAVNINFVAFSI), and 73 to 93 (IIILTVAAAETSIGLAILLIY).

The protein belongs to the complex I subunit 4L family. In terms of assembly, NDH-1 is composed of 14 different subunits. Subunits NuoA, H, J, K, L, M, N constitute the membrane sector of the complex.

Its subcellular location is the cell inner membrane. The catalysed reaction is a quinone + NADH + 5 H(+)(in) = a quinol + NAD(+) + 4 H(+)(out). Functionally, NDH-1 shuttles electrons from NADH, via FMN and iron-sulfur (Fe-S) centers, to quinones in the respiratory chain. The immediate electron acceptor for the enzyme in this species is believed to be ubiquinone. Couples the redox reaction to proton translocation (for every two electrons transferred, four hydrogen ions are translocated across the cytoplasmic membrane), and thus conserves the redox energy in a proton gradient. The protein is NADH-quinone oxidoreductase subunit K of Rickettsia conorii (strain ATCC VR-613 / Malish 7).